The following is a 76-amino-acid chain: MKLIIFTGLALFLLVSLIDVEAQNEGACIPHGSVCTTNHAGCCSKLSCDCYRRFEKGVEKGQKCWCIETGVTFSKE.

The first 22 residues, 1–22, serve as a signal peptide directing secretion; sequence MKLIIFTGLALFLLVSLIDVEA. Positions 23 to 26 are excised as a propeptide; it reads QNEG.

The protein belongs to the neurotoxin 19 (CSTX) family. 07 (U7-Lctx) subfamily. In terms of processing, contains 4 disulfide bonds. Expressed by the venom gland.

It is found in the secreted. In Lycosa singoriensis (Wolf spider), this protein is U7-lycotoxin-Ls1c.